Reading from the N-terminus, the 462-residue chain is Probable peptidoglycan glycosyltransferase FtsW (462 aa).

Residues 1 to 28 (MREPRHVPQLRASGRRFPQRGRRHRFGK) form a disordered region. The Cytoplasmic segment spans residues 1 to 92 (MREPRHVPQL…RSRMLDFDYS (92 aa)). The segment covering 13 to 27 (SGRRFPQRGRRHRFG) has biased composition (basic residues). A helical membrane pass occupies residues 93 to 113 (LLWVSIALLGLGVVMVYSASI). Topologically, residues 114–127 (AMPDSPKYASYHDY) are periplasmic. A helical membrane pass occupies residues 128–148 (AFLLRHCVSLVVAFVAAVIAF). The Cytoplasmic portion of the chain corresponds to 149–158 (RVPVSTWDKY). Residues 159–179 (APHLFLIALVGLVIVLIPHIG) traverse the membrane as a helical segment. Residues 180 to 192 (KGVNGARRWIPLG) lie on the Periplasmic side of the membrane. The helical transmembrane segment at 193 to 215 (ITNMQPSEIMKLAVTIYAANYTV) threads the bilayer. The Cytoplasmic portion of the chain corresponds to 216-223 (RKQEYMQS). A helical membrane pass occupies residues 224-244 (FAKGFLPMAFAVGLVGALLLL). The Periplasmic segment spans residues 245 to 247 (EPD). The chain crosses the membrane as a helical span at residues 248 to 268 (MGAFMVVAAIAMGVLFLGGVN). Over 269-270 (GK) the chain is Cytoplasmic. The helical transmembrane segment at 271-291 (LFGGLVATAVGTFTMLVWLSP) threads the bilayer. Residues 292 to 349 (WRRERIFAYLDPWDERYAQGKAYQLTHSLIAFGRGEWFGVGLGGSVEKLNYLPEAHTD) are Periplasmic-facing. The chain crosses the membrane as a helical span at residues 350–370 (FILAVIGEELGFVGVLVVILL). Topologically, residues 371 to 398 (FYWIVRRSFEIGRQALALDRTFAGLMAK) are cytoplasmic. Residues 399–419 (GVGIWFGAQAFINMGVNLGLL) traverse the membrane as a helical segment. The Periplasmic segment spans residues 420–425 (PTKGLT). The chain crosses the membrane as a helical span at residues 426-446 (LPLVSYGGSGILLNCISLAVL). The Cytoplasmic portion of the chain corresponds to 447-462 (LRVDYENRVLMRGGKV).

This sequence belongs to the SEDS family. FtsW subfamily.

Its subcellular location is the cell inner membrane. It catalyses the reaction [GlcNAc-(1-&gt;4)-Mur2Ac(oyl-L-Ala-gamma-D-Glu-L-Lys-D-Ala-D-Ala)](n)-di-trans,octa-cis-undecaprenyl diphosphate + beta-D-GlcNAc-(1-&gt;4)-Mur2Ac(oyl-L-Ala-gamma-D-Glu-L-Lys-D-Ala-D-Ala)-di-trans,octa-cis-undecaprenyl diphosphate = [GlcNAc-(1-&gt;4)-Mur2Ac(oyl-L-Ala-gamma-D-Glu-L-Lys-D-Ala-D-Ala)](n+1)-di-trans,octa-cis-undecaprenyl diphosphate + di-trans,octa-cis-undecaprenyl diphosphate + H(+). Its pathway is cell wall biogenesis; peptidoglycan biosynthesis. In terms of biological role, peptidoglycan polymerase that is essential for cell division. This chain is Probable peptidoglycan glycosyltransferase FtsW, found in Burkholderia thailandensis (strain ATCC 700388 / DSM 13276 / CCUG 48851 / CIP 106301 / E264).